The chain runs to 503 residues: Glycerol kinase (503 aa).

Position 14 (Thr-14) interacts with ADP. Positions 14, 15, and 16 each coordinate ATP. Residue Thr-14 participates in sn-glycerol 3-phosphate binding. Residue Arg-18 participates in ADP binding. Residues Arg-84, Glu-85, Tyr-136, and Asp-246 each coordinate sn-glycerol 3-phosphate. Residues Arg-84, Glu-85, Tyr-136, Asp-246, and Gln-247 each contribute to the glycerol site. Residues Thr-268 and Gly-311 each contribute to the ADP site. ATP is bound by residues Thr-268, Gly-311, Gln-315, and Gly-412. 2 residues coordinate ADP: Gly-412 and Asn-416.

The protein belongs to the FGGY kinase family. In terms of assembly, homotetramer and homodimer (in equilibrium). Heterodimer with EIIA-Glc. Binds 1 zinc ion per glycerol kinase EIIA-Glc dimer. The zinc ion is important for dimerization.

The enzyme catalyses glycerol + ATP = sn-glycerol 3-phosphate + ADP + H(+). It participates in polyol metabolism; glycerol degradation via glycerol kinase pathway; sn-glycerol 3-phosphate from glycerol: step 1/1. Activity of this regulatory enzyme is affected by several metabolites. Allosterically and non-competitively inhibited by fructose 1,6-bisphosphate (FBP) and unphosphorylated phosphocarrier protein EIIA-Glc (III-Glc), an integral component of the bacterial phosphotransferase (PTS) system. Functionally, key enzyme in the regulation of glycerol uptake and metabolism. Catalyzes the phosphorylation of glycerol to yield sn-glycerol 3-phosphate. This is Glycerol kinase from Klebsiella pneumoniae subsp. pneumoniae (strain ATCC 700721 / MGH 78578).